The following is a 557-amino-acid chain: Ribonuclease J 2 (557 aa).

Zn(2+) is bound by residues His-76, His-78, His-144, and Glu-166. His-366–His-370 is a binding site for substrate.

The protein belongs to the metallo-beta-lactamase superfamily. RNA-metabolizing metallo-beta-lactamase-like family. Bacterial RNase J subfamily. As to quaternary structure, homodimer, may be a subunit of the RNA degradosome. The cofactor is Zn(2+).

Its subcellular location is the cytoplasm. An RNase that has 5'-3' exonuclease and possibly endoonuclease activity. Involved in maturation of rRNA and in some organisms also mRNA maturation and/or decay. The protein is Ribonuclease J 2 of Staphylococcus epidermidis (strain ATCC 35984 / DSM 28319 / BCRC 17069 / CCUG 31568 / BM 3577 / RP62A).